Reading from the N-terminus, the 1158-residue chain is ATP-dependent helicase/deoxyribonuclease subunit B (1158 aa).

8-15 (GRAGTGKS) contributes to the ATP binding site. [4Fe-4S] cluster contacts are provided by Cys791, Cys1112, Cys1115, and Cys1121.

The protein belongs to the helicase family. AddB/RexB type 1 subfamily. In terms of assembly, heterodimer of AddA and AddB. The cofactor is Mg(2+). [4Fe-4S] cluster serves as cofactor.

In terms of biological role, the heterodimer acts as both an ATP-dependent DNA helicase and an ATP-dependent, dual-direction single-stranded exonuclease. Recognizes the chi site generating a DNA molecule suitable for the initiation of homologous recombination. The AddB subunit has 5' -&gt; 3' nuclease activity but not helicase activity. This is ATP-dependent helicase/deoxyribonuclease subunit B from Clostridium perfringens (strain ATCC 13124 / DSM 756 / JCM 1290 / NCIMB 6125 / NCTC 8237 / Type A).